A 243-amino-acid polypeptide reads, in one-letter code: Venom nerve growth factor (243 aa).

A signal peptide spans 1–18; it reads MSMLCYTLIIAFLIGIWA. Residues 19–125 constitute a propeptide that is removed on maturation; sequence APKSEDNVPL…TLNRNIWANN (107 aa). Basic and acidic residues predominate over residues 47 to 66; sequence GLKTSRNTDQHHPTPKKSED. The disordered stretch occupies residues 47–70; that stretch reads GLKTSRNTDQHHPTPKKSEDQELG. 3 cysteine pairs are disulfide-bonded: C139/C204, C182/C232, and C192/C234. The N-linked (GlcNAc...) asparagine glycan is linked to N148.

Belongs to the NGF-beta family. As to quaternary structure, homodimer. Expressed by the venom gland.

The protein localises to the secreted. In terms of biological role, nerve growth factor is important for the development and maintenance of the sympathetic and sensory nervous systems. It stimulates division and differentiation of sympathetic and embryonic sensory neurons as well as basal forebrain cholinergic neurons in the brain. Its relevance in the snake venom is not clear. However, it has been shown to inhibit metalloproteinase-dependent proteolysis of platelet glycoprotein Ib alpha, suggesting a metalloproteinase inhibition to prevent metalloprotease autodigestion and/or protection against prey proteases. Binds a lipid between the two protein chains in the homodimer. The lipid-bound form promotes histamine relase from mouse mast cells, contrary to the lipid-free form. This Bungarus multicinctus (Many-banded krait) protein is Venom nerve growth factor.